We begin with the raw amino-acid sequence, 254 residues long: Peroxisomal membrane protein 11-2 (254 aa).

Over 1–113 (MVTAAGSPSS…YHPHPHVHPL (113 aa)) the chain is Cytoplasmic. A helical membrane pass occupies residues 114-134 (LVLLAYGGQGVYNFLEQFAWL). Residues 135-227 (AKAGLLPARL…TVGDVTGRKG (93 aa)) lie on the Lumenal side of the membrane. A helical membrane pass occupies residues 228 to 247 (LLGSSTLMASAGLLSALISV). At 248-254 (HKNWNSC) the chain is on the cytoplasmic side.

The protein belongs to the peroxin-11 family.

It localises to the peroxisome membrane. In terms of biological role, involved in peroxisomal proliferation. The sequence is that of Peroxisomal membrane protein 11-2 (PEX11-2) from Oryza sativa subsp. japonica (Rice).